We begin with the raw amino-acid sequence, 331 residues long: High-affinity nickel-transport protein NixA (331 aa).

7 helical membrane passes run 3 to 23 (LWFP…ALLF), 77 to 97 (MGHS…IAWA), 110 to 130 (VVGT…NAII), 184 to 204 (PVGF…LLAL), 213 to 233 (VVGM…FDTL), 259 to 279 (ITAL…FQVI), and 302 to 322 (DLGY…FFLW).

Belongs to the NiCoT transporter (TC 2.A.52) family.

It is found in the cell inner membrane. High-affinity nickel intake protein. Imports nickel ions in an energy-dependent fashion. Necessary for the expression of catalytically active urease. In Helicobacter pylori (strain J99 / ATCC 700824) (Campylobacter pylori J99), this protein is High-affinity nickel-transport protein NixA (nixA).